The primary structure comprises 455 residues: Epoxide hydrolase 1 (455 aa).

A helical; Signal-anchor for type III membrane protein membrane pass occupies residues 1 to 21; sequence MWLELVLASLLGFVIYWFVSR. Topologically, residues 22–455 are cytoplasmic; sequence DKEETLPLGD…RKFVSLAELQ (434 aa). Aspartate 226 functions as the Nucleophile in the catalytic mechanism. Dimethylated arginine is present on arginine 295. Tyrosine 374 functions as the Proton donor in the catalytic mechanism. The active-site Proton acceptor is the histidine 431. The residue at position 439 (lysine 439) is an N6-acetyllysine.

It belongs to the peptidase S33 family.

It is found in the microsome membrane. The protein localises to the endoplasmic reticulum membrane. The catalysed reaction is cis-stilbene oxide + H2O = (1R,2R)-hydrobenzoin. It catalyses the reaction 1-(4-methoxyphenyl)-N-methyl-N-[(3-methyloxetan-3-yl)methyl]methanamine + H2O = 2-{[(4-methoxybenzyl)(methyl)amino]methyl}-2-methylpropane-1,3-diol. It carries out the reaction 8,9-epoxy-(5Z,11Z,14Z)-eicosatrienoate + H2O = 8,9-dihydroxy-(5Z,11Z,14Z)-eicosatrienoate. The enzyme catalyses 11,12-epoxy-(5Z,8Z,14Z)-eicosatrienoate + H2O = 11,12-dihydroxy-(5Z,8Z,14Z)-eicosatrienoate. The catalysed reaction is 2-(5Z,8Z,11Z,14Z-eicosatetraenoyl)-glycerol + H2O = glycerol + (5Z,8Z,11Z,14Z)-eicosatetraenoate + H(+). Inhibited by 10-hydroxystearamide and methoxy-arachidonyl fluorophosphate. In terms of biological role, biotransformation enzyme that catalyzes the hydrolysis of arene and aliphatic epoxides to less reactive and more water soluble dihydrodiols by the trans addition of water. May play a role in the metabolism of endogenous lipids such as epoxide-containing fatty acids. Metabolizes the abundant endocannabinoid 2-arachidonoylglycerol (2-AG) to free arachidonic acid (AA) and glycerol. Binds 20(S)-hydroxycholesterol (20(S)-OHC). This is Epoxide hydrolase 1 from Rattus norvegicus (Rat).